Here is a 362-residue protein sequence, read N- to C-terminus: Adenosine deaminase (362 aa).

Zn(2+) contacts are provided by histidine 19 and histidine 21. 3 residues coordinate substrate: histidine 21, aspartate 23, and glycine 181. Residue histidine 208 coordinates Zn(2+). Residue glutamate 211 is the Proton donor of the active site. Aspartate 300 is a binding site for Zn(2+).

It belongs to the metallo-dependent hydrolases superfamily. Adenosine and AMP deaminases family. Adenosine deaminase subfamily. Requires Zn(2+) as cofactor.

It catalyses the reaction adenosine + H2O + H(+) = inosine + NH4(+). It carries out the reaction 2'-deoxyadenosine + H2O + H(+) = 2'-deoxyinosine + NH4(+). In terms of biological role, catalyzes the hydrolytic deamination of adenosine and 2-deoxyadenosine. This is Adenosine deaminase from Mycolicibacterium vanbaalenii (strain DSM 7251 / JCM 13017 / BCRC 16820 / KCTC 9966 / NRRL B-24157 / PYR-1) (Mycobacterium vanbaalenii).